A 59-amino-acid chain; its full sequence is Large ribosomal subunit protein uL30 (59 aa).

It belongs to the universal ribosomal protein uL30 family. In terms of assembly, part of the 50S ribosomal subunit.

This chain is Large ribosomal subunit protein uL30, found in Listeria welshimeri serovar 6b (strain ATCC 35897 / DSM 20650 / CCUG 15529 / CIP 8149 / NCTC 11857 / SLCC 5334 / V8).